A 123-amino-acid chain; its full sequence is Large ribosomal subunit protein uL14c (123 aa).

Belongs to the universal ribosomal protein uL14 family. In terms of assembly, part of the 50S ribosomal subunit.

The protein resides in the plastid. Its subcellular location is the chloroplast. Its function is as follows. Binds to 23S rRNA. This Lolium perenne (Perennial ryegrass) protein is Large ribosomal subunit protein uL14c.